The sequence spans 68 residues: Small ribosomal subunit protein bS21 (68 aa).

Positions 37–49 (EKPSEKRAREKAA) are enriched in basic and acidic residues. The disordered stretch occupies residues 37-68 (EKPSEKRAREKAAAVRRARKMERKRMERDGIK). A compositionally biased stretch (basic residues) spans 50 to 59 (AVRRARKMER).

The protein belongs to the bacterial ribosomal protein bS21 family.

The protein is Small ribosomal subunit protein bS21 of Erythrobacter litoralis (strain HTCC2594).